The primary structure comprises 183 residues: Mast cell-expressed membrane protein 1 (183 aa).

Positions 1–26 are disordered; sequence MHASASQDKNRRKPGHDEGAHNPDYE. The Cytoplasmic portion of the chain corresponds to 1-70; the sequence is MHASASQDKN…PPWLYRTIMM (70 aa). Residues 15-24 are compositionally biased toward basic and acidic residues; sequence GHDEGAHNPD. The helical; Signal-anchor for type II membrane protein transmembrane segment at 71–91 threads the bilayer; it reads LYVLLALVFLSCIVLSALVLV. The Extracellular portion of the chain corresponds to 92 to 183; the sequence is KNSEMSKELW…EKKAQPQPST (92 aa). A glycan (N-linked (GlcNAc...) asparagine) is linked at asparagine 109.

It localises to the membrane. The sequence is that of Mast cell-expressed membrane protein 1 from Mus musculus (Mouse).